Reading from the N-terminus, the 495-residue chain is WD repeat-containing protein 37 (495 aa).

Composition is skewed to polar residues over residues 1–13 (MPTE…TARQ) and 22–31 (SLSIRRTNSS). The interval 1–50 (MPTESASCSTARQTKQKRKSHSLSIRRTNSSEQERTGLPRDMLEGQDSKL) is disordered. The span at 32–47 (EQERTGLPRDMLEGQD) shows a compositional bias: basic and acidic residues. WD repeat units lie at residues 154–194 (GHRD…CLVK) and 197–236 (GHVG…PTPQ). A disordered region spans residues 237–266 (PVADTSQISGEDEVECSDKDEPDLDGDVSS). Positions 246–264 (GEDEVECSDKDEPDLDGDV) are enriched in acidic residues. WD repeat units lie at residues 280-319 (SHQG…LVHS), 322-361 (GHDQ…IHSV), 366-404 (GHTD…SPIA), 407-446 (RTDS…LARL), and 453-494 (GHRR…LLQE).

As to quaternary structure, forms homodimers. Interacts with PACS1. Interacts with PACS2.

It localises to the cytoplasm. Its subcellular location is the nucleus. Required for normal ER Ca2+ handling in lymphocytes. Together with PACS1, it plays an essential role in stabilizing peripheral lymphocyte populations. This Pongo abelii (Sumatran orangutan) protein is WD repeat-containing protein 37 (WDR37).